Reading from the N-terminus, the 548-residue chain is Chaperonin GroEL 1 (548 aa).

Residues 30–33 (TLGP), Lys51, 87–91 (DGTTT), Gly415, 479–481 (NAA), and Asp495 each bind ATP.

Belongs to the chaperonin (HSP60) family. Forms a cylinder of 14 subunits composed of two heptameric rings stacked back-to-back. Interacts with the co-chaperonin GroES.

It localises to the cytoplasm. The catalysed reaction is ATP + H2O + a folded polypeptide = ADP + phosphate + an unfolded polypeptide.. Functionally, together with its co-chaperonin GroES, plays an essential role in assisting protein folding. The GroEL-GroES system forms a nano-cage that allows encapsulation of the non-native substrate proteins and provides a physical environment optimized to promote and accelerate protein folding. The protein is Chaperonin GroEL 1 of Vibrio harveyi (Beneckea harveyi).